We begin with the raw amino-acid sequence, 486 residues long: HTH-type transcriptional regulator PrpR (486 aa).

An HTH cro/C1-type domain is found at 22–76 (LRRLRQERGLTQVALAKALDLSTSYVNQLENDQRPITVPVLLLLTERFDLSAQYF). Positions 33-52 (QVALAKALDLSTSYVNQLEN) form a DNA-binding region, H-T-H motif.

Belongs to the short-chain fatty acyl-CoA assimilation regulator (ScfR) family.

It participates in organic acid metabolism; propanoate degradation. Its pathway is steroid metabolism; cholesterol metabolism. In terms of biological role, plays a key role in regulating expression of enzymes involved in the catabolism of short chain fatty acids (SCFA) via both the glyoxylate (acetyl degradation route) and the methylcitrate cycle (propionate degradation route). Required for intracellular growth in macrophages and for the assimilation of cholesterol-derived propionate. PrpR acts as a transcriptional activator of prpDC and icl genes when propionate is the main carbon source, and as a ramB repressor. During growth on propionate, PrpR also acts as a transcriptional repressor of dnaA, which encodes the DnaA initiator protein responsible for initiating chromosomal replication. It is possibly involved in the regulation of genes responsible for controlling cholesterol utilization. In Mycobacterium tuberculosis (strain ATCC 25618 / H37Rv), this protein is HTH-type transcriptional regulator PrpR.